The sequence spans 623 residues: Actin-related protein 8 (623 aa).

Over residues 1–24 (MTQTDRDAENGRDREKDREKEQQR) the composition is skewed to basic and acidic residues. Residues 1 to 29 (MTQTDRDAENGRDREKDREKEQQRGVKRP) are disordered. 283–286 (DVGD) serves as a coordination point for ATP. The span at 428–438 (TQSKQDQSSKA) shows a compositional bias: low complexity. The disordered stretch occupies residues 428–458 (TQSKQDQSSKASADRKSFPKPSSFEGESSVC).

It belongs to the actin family. ARP8 subfamily. Component of the chromatin remodeling INO80 complex; specifically part of a complex module associated with the DBINO domain of INO80. Exists as monomers and dimers, but the dimer is most probably the biologically relevant form required for stable interactions with histones that exploits the twofold symmetry of the nucleosome core.

It localises to the nucleus. It is found in the chromosome. In terms of biological role, plays an important role in the functional organization of mitotic chromosomes. Exhibits low basal ATPase activity, and unable to polymerize. Functionally, proposed core component of the chromatin remodeling INO80 complex which is involved in transcriptional regulation, DNA replication and probably DNA repair. Required for the recruitment of INO80 (and probably the INO80 complex) to sites of DNA damage Strongly prefer nucleosomes and H3-H4 tetramers over H2A-H2B dimers, suggesting it may act as a nucleosome recognition module within the complex. This chain is Actin-related protein 8 (actr8), found in Danio rerio (Zebrafish).